The sequence spans 705 residues: Elongation factor G (705 aa).

The tr-type G domain occupies 8-290 (ERYRNFGIMA…GVVHLLPSPA (283 aa)). GTP is bound by residues 17 to 24 (AHIDAGKT), 88 to 92 (DTPGH), and 142 to 145 (NKMD). Residues 290 to 309 (ADRPPVQGIDEDEKEDTRAA) are disordered.

This sequence belongs to the TRAFAC class translation factor GTPase superfamily. Classic translation factor GTPase family. EF-G/EF-2 subfamily.

It is found in the cytoplasm. Catalyzes the GTP-dependent ribosomal translocation step during translation elongation. During this step, the ribosome changes from the pre-translocational (PRE) to the post-translocational (POST) state as the newly formed A-site-bound peptidyl-tRNA and P-site-bound deacylated tRNA move to the P and E sites, respectively. Catalyzes the coordinated movement of the two tRNA molecules, the mRNA and conformational changes in the ribosome. The protein is Elongation factor G of Xanthomonas oryzae pv. oryzae (strain MAFF 311018).